A 341-amino-acid chain; its full sequence is L-threonine 3-dehydrogenase (341 aa).

Residue C38 coordinates Zn(2+). Residues T40 and H43 each act as charge relay system in the active site. H63, E64, C93, C96, C99, and C107 together coordinate Zn(2+). NAD(+)-binding positions include I175, D195, R200, 262 to 264 (LGI), and 286 to 287 (IY).

The protein belongs to the zinc-containing alcohol dehydrogenase family. In terms of assembly, homotetramer. Zn(2+) is required as a cofactor.

It is found in the cytoplasm. It catalyses the reaction L-threonine + NAD(+) = (2S)-2-amino-3-oxobutanoate + NADH + H(+). It functions in the pathway amino-acid degradation; L-threonine degradation via oxydo-reductase pathway; glycine from L-threonine: step 1/2. Functionally, catalyzes the NAD(+)-dependent oxidation of L-threonine to 2-amino-3-ketobutyrate. The polypeptide is L-threonine 3-dehydrogenase (Shigella sonnei (strain Ss046)).